Consider the following 382-residue polypeptide: Pyrimidine monooxygenase RutA (382 aa).

FMN contacts are provided by residues 68-69, asparagine 134, glutamate 143, 159-160, and serine 209; these read IK and RY.

The protein belongs to the NtaA/SnaA/DszA monooxygenase family. RutA subfamily.

It carries out the reaction uracil + FMNH2 + NADH + O2 = (Z)-3-ureidoacrylate + FMN + NAD(+) + H2O + H(+). The enzyme catalyses thymine + FMNH2 + NADH + O2 = (Z)-2-methylureidoacrylate + FMN + NAD(+) + H2O + H(+). Functionally, catalyzes the pyrimidine ring opening between N-3 and C-4 by an unusual flavin hydroperoxide-catalyzed mechanism, adding oxygen atoms in the process to yield ureidoacrylate peracid, that immediately reacts with FMN forming ureidoacrylate and FMN-N(5)-oxide. The FMN-N(5)-oxide reacts spontaneously with NADH to produce FMN. Requires the flavin reductase RutF to regenerate FMN in vivo. In Escherichia coli (strain 55989 / EAEC), this protein is Pyrimidine monooxygenase RutA.